Here is a 268-residue protein sequence, read N- to C-terminus: Taurine import ATP-binding protein TauB (268 aa).

The ABC transporter domain occupies 4-236 (LSINNLSMRF…LGVDSDLREV (233 aa)). An ATP-binding site is contributed by 41 to 48 (GPSGCGKT).

Belongs to the ABC transporter superfamily. Taurine importer (TC 3.A.1.17.1) family. In terms of assembly, the complex is composed of two ATP-binding proteins (TauB), two transmembrane proteins (TauC) and a solute-binding protein (TauA).

Its subcellular location is the cell inner membrane. It catalyses the reaction taurine(out) + ATP + H2O = taurine(in) + ADP + phosphate + H(+). Functionally, part of the ABC transporter complex TauABC involved in taurine import. Responsible for energy coupling to the transport system. This is Taurine import ATP-binding protein TauB from Roseobacter denitrificans (strain ATCC 33942 / OCh 114) (Erythrobacter sp. (strain OCh 114)).